Reading from the N-terminus, the 375-residue chain is Succinyl-diaminopimelate desuccinylase (375 aa).

H66 serves as a coordination point for Zn(2+). Residue D68 is part of the active site. Residue D99 participates in Zn(2+) binding. The Proton acceptor role is filled by E133. Zn(2+) contacts are provided by E134, E162, and H348.

It belongs to the peptidase M20A family. DapE subfamily. Homodimer. Zn(2+) serves as cofactor. The cofactor is Co(2+).

It catalyses the reaction N-succinyl-(2S,6S)-2,6-diaminopimelate + H2O = (2S,6S)-2,6-diaminopimelate + succinate. Its pathway is amino-acid biosynthesis; L-lysine biosynthesis via DAP pathway; LL-2,6-diaminopimelate from (S)-tetrahydrodipicolinate (succinylase route): step 3/3. In terms of biological role, catalyzes the hydrolysis of N-succinyl-L,L-diaminopimelic acid (SDAP), forming succinate and LL-2,6-diaminopimelate (DAP), an intermediate involved in the bacterial biosynthesis of lysine and meso-diaminopimelic acid, an essential component of bacterial cell walls. This Teredinibacter turnerae (strain ATCC 39867 / T7901) protein is Succinyl-diaminopimelate desuccinylase.